A 223-amino-acid chain; its full sequence is ATP phosphoribosyltransferase (223 aa).

Belongs to the ATP phosphoribosyltransferase family. Short subfamily. In terms of assembly, heteromultimer composed of HisG and HisZ subunits.

The protein localises to the cytoplasm. It carries out the reaction 1-(5-phospho-beta-D-ribosyl)-ATP + diphosphate = 5-phospho-alpha-D-ribose 1-diphosphate + ATP. The protein operates within amino-acid biosynthesis; L-histidine biosynthesis; L-histidine from 5-phospho-alpha-D-ribose 1-diphosphate: step 1/9. In terms of biological role, catalyzes the condensation of ATP and 5-phosphoribose 1-diphosphate to form N'-(5'-phosphoribosyl)-ATP (PR-ATP). Has a crucial role in the pathway because the rate of histidine biosynthesis seems to be controlled primarily by regulation of HisG enzymatic activity. The chain is ATP phosphoribosyltransferase from Bordetella bronchiseptica (strain ATCC BAA-588 / NCTC 13252 / RB50) (Alcaligenes bronchisepticus).